The sequence spans 559 residues: Coiled-coil domain-containing protein 63 (559 aa).

Coiled-coil stretches lie at residues 14–70, 185–261, and 364–414; these read ELSE…QAET, EKAA…KLKS, and QQQS…VEKL.

In terms of biological role, plays a role in spermiogenesis. Involved in the elongation of flagella and the formation of sperm heads. The polypeptide is Coiled-coil domain-containing protein 63 (Rattus norvegicus (Rat)).